The chain runs to 73 residues: uncharacterized protein (73 aa).

This is an uncharacterized protein from Dictyostelium discoideum (Social amoeba).